Consider the following 363-residue polypeptide: S-adenosylmethionine:tRNA ribosyltransferase-isomerase (363 aa).

It belongs to the QueA family. As to quaternary structure, monomer.

It is found in the cytoplasm. The catalysed reaction is 7-aminomethyl-7-carbaguanosine(34) in tRNA + S-adenosyl-L-methionine = epoxyqueuosine(34) in tRNA + adenine + L-methionine + 2 H(+). The protein operates within tRNA modification; tRNA-queuosine biosynthesis. In terms of biological role, transfers and isomerizes the ribose moiety from AdoMet to the 7-aminomethyl group of 7-deazaguanine (preQ1-tRNA) to give epoxyqueuosine (oQ-tRNA). This is S-adenosylmethionine:tRNA ribosyltransferase-isomerase from Pasteurella multocida (strain Pm70).